Here is a 2363-residue protein sequence, read N- to C-terminus: Spectrin beta chain, non-erythrocytic 1 (2363 aa).

Thr-2 bears the N-acetylthreonine mark. The actin-binding stretch occupies residues 2–275 (TTTVATDYDN…IITYVVTYYH (274 aa)). A phosphoserine mark is found at Ile-14 and Ser-36. Calponin-homology (CH) domains lie at 54-158 (AVQK…LRFQ) and 173-278 (KSAK…HYFS). Lys-90 carries the N6-acetyllysine modification. At Ser-228 the chain carries Phosphoserine. Spectrin repeat units lie at residues 303–411 (MIEK…LALR), 423–525 (LARR…QRLE), 530–636 (LQKI…RLEE), 639–742 (RLWK…RLEE), 745–847 (LLHQ…ALQD), 850–952 (ALYK…DALL), 957–1060 (IQNY…SLGE), 1063–1166 (KLQQ…NLLS), 1170–1259 (AYQQ…RHRK), 1276–1376 (DLQK…AQRL), 1381–1482 (KAEL…HNLL), 1486–1590 (EIHQ…RLEE), 1592–1696 (HKAQ…KLDE), 1698–1801 (HRLF…TQIL), and 1805–1907 (YELH…RVRL). Phosphoserine is present on residues Ser-817, Ser-903, Ser-1057, Ser-1076, Ser-1079, and Ser-1237. 3 positions are modified to phosphoserine: Ser-1388, Ser-1447, and Ser-1557. Residues 1563-2093 (IRQRLADLKQ…LLEVRRQQEE (531 aa)) are interaction with ANK2. The residue at position 1805 (Tyr-1805) is a Phosphotyrosine. Lys-1815, Lys-1913, and Lys-1989 each carry N6-acetyllysine. Spectrin repeat units follow at residues 1914–2014 (FRFF…EWLR) and 2018–2097 (EVHQ…EERK). Residues 2089 to 2193 (RQQEEEERKR…AATLPARTLE (105 aa)) form a disordered region. Ser-2102, Ser-2127, and Ser-2137 each carry phosphoserine. Positions 2115 to 2130 (SQQWDTSKGDQVSQNG) are enriched in polar residues. Thr-2146 carries the post-translational modification Phosphothreonine. Ser-2147 carries the post-translational modification Phosphoserine. The segment at 2148–2176 (EMVNGAAEQRTSSKESSPVPSPTLDRKAK) is mediates interaction with CAMSAP1. Thr-2158 carries the post-translational modification Phosphothreonine. Phosphoserine is present on residues Ser-2159, Ser-2160, Ser-2163, Ser-2164, and Ser-2168. Phosphothreonine is present on Thr-2170. Position 2183 is a phosphoserine (Ser-2183). Phosphothreonine occurs at positions 2186 and 2194. A PH domain is found at 2196–2306 (AAQMEGFLNR…WIQAISSAIS (111 aa)). The disordered stretch occupies residues 2308 to 2363 (DKHDTSASTQSTPASSRAQTLPTSVVTITSESSPGKREKDKEKDKEKRFSLFGKKK). Residues Ser-2313 and Ser-2318 each carry the phosphoserine modification. Positions 2313–2327 (SASTQSTPASSRAQT) are enriched in low complexity. Thr-2319 carries the post-translational modification Phosphothreonine. Ser-2323 carries an O-linked (GlcNAc) serine glycan. The residue at position 2327 (Thr-2327) is a Phosphothreonine. The segment covering 2328 to 2340 (LPTSVVTITSESS) has biased composition (polar residues). Phosphoserine is present on residues Ser-2339 and Ser-2340. Basic and acidic residues predominate over residues 2341–2356 (PGKREKDKEKDKEKRF).

This sequence belongs to the spectrin family. As to quaternary structure, interacts with ANK2. Interacts with CPNE4 (via VWFA domain). Like erythrocyte spectrin, the spectrin-like proteins are capable to form dimers which can further associate to tetramers. Interacts with CAMSAP1. Can form heterodimers with SPTAN1. As to expression, isoform 2 is present in brain, heart, kidney and liver (at protein level).

Its subcellular location is the cytoplasm. The protein resides in the cytoskeleton. It is found in the endomembrane system. The protein localises to the myofibril. It localises to the sarcomere. Its subcellular location is the m line. The protein resides in the cytosol. It is found in the cell membrane. Fodrin, which seems to be involved in secretion, interacts with calmodulin in a calcium-dependent manner and is thus candidate for the calcium-dependent movement of the cytoskeleton at the membrane. Plays a critical role in central nervous system development and function. This chain is Spectrin beta chain, non-erythrocytic 1 (Sptbn1), found in Mus musculus (Mouse).